Consider the following 296-residue polypeptide: Thioredoxin-related transmembrane protein 2 (296 aa).

Positions 1–48 (MAVLAPLIALVYSVPRLSRWLAQPYYLLSALLSAAFLLVRKLPPLCHG) are cleaved as a signal peptide. The Extracellular segment spans residues 49-102 (LPTQREDGNPCDFDWREVEILMFLSAIVMMKNRRSITVEQHIGNIFMFSKVANA). The chain crosses the membrane as a helical span at residues 103 to 125 (ILFFRLDIRMGLLYITLCIVFLM). In terms of domain architecture, Thioredoxin spans 114–269 (LLYITLCIVF…LYQRAKKLSK (156 aa)). The Cytoplasmic segment spans residues 126–296 (TCKPPLYMGP…VSDGESKKDK (171 aa)). Phosphoserine is present on residues Ser-211, Ser-243, and Ser-288. The interval 269-296 (KAGDNIPEEQPVAPTPTRVSDGESKKDK) is disordered. Residues 293–296 (KKDK) carry the Di-lysine motif motif.

Monomer. Homodimer; disulfide-linked. Occurs in both reduced and oxidized monomeric form. Oxidative conditions increase homodimerization. Interacts with CANX. Interacts with ATP2A2.

It localises to the endoplasmic reticulum membrane. Its subcellular location is the mitochondrion membrane. Its function is as follows. Endoplasmic reticulum and mitochondria-associated protein that probably functions as a regulator of cellular redox state and thereby regulates protein post-translational modification, protein folding and mitochondrial activity. Indirectly regulates neuronal proliferation, migration, and organization in the developing brain. This chain is Thioredoxin-related transmembrane protein 2 (TMX2), found in Macaca fascicularis (Crab-eating macaque).